Here is a 439-residue protein sequence, read N- to C-terminus: MGQNQSAQGGAGEKKDDKDKKKKYEPPIPTRVGKKKRRAKGPDAAMKLPQVTPHTRCRLKLLKLERIKDYLMMEDEFIRNQERLKPQDEKNEEERSKVDDLRGTPMSVGNLEEIIDDNHAIVSTSVGSEHYVSILSFVDKDQLEPGCSVLLNHKVHAVVGVLSDDTDPMVTVMKLEKAPQETYADIGGLDTQIQEIKESVELPLTHPEYYEEMGIKPPKGVILYGPPGTGKTLLAKAVANQTSATFLRVVGSELIQKYLGDGPKLVRELFRVAEEHAPSIVFIDEIDAVGTKRYDSNSGGEREIQRTMLELLNQLDGFDSRGDVKVIMATNRIETLDPALIRPGRIDRKIEFPLPDEKTKRRIFTIHTSRMTLAEDVNLSELIMAKDDLSGADIKAICTEAGLMALRERRMKVTNEDFKKSKESVLYRKKEGTPEGLYL.

2 disordered regions span residues 1–48 (MGQN…AMKL) and 82–104 (ERLK…LRGT). 2 stretches are compositionally biased toward basic and acidic residues: residues 12–25 (GEKK…KKYE) and 82–102 (ERLK…DDLR). ATP is bound at residue 225 to 232 (GPPGTGKT).

This sequence belongs to the AAA ATPase family. In terms of assembly, interacts with PSMD5.

Its subcellular location is the cytoplasm. The protein resides in the nucleus. The 26S proteasome is involved in the ATP-dependent degradation of ubiquitinated proteins. The regulatory (or ATPase) complex confers ATP dependency and substrate specificity to the 26S complex. The protein is 26S proteasome regulatory subunit 4 (Rpt2) of Drosophila melanogaster (Fruit fly).